The primary structure comprises 117 residues: Reprimo-like protein (117 aa).

A helical membrane pass occupies residues 64-84 (VAQIAVLCVLSLTVVFGVFFL). Ser-106 carries the phosphoserine modification.

It belongs to the reprimo family.

The protein resides in the membrane. The protein is Reprimo-like protein (Rprml) of Mus musculus (Mouse).